A 353-amino-acid polypeptide reads, in one-letter code: Membrane lipoprotein TmpC (353 aa).

The first 20 residues, 1–20 (MREKWVRAFAGVFCAMLLIG), serve as a signal peptide directing secretion. Cys21 is lipidated: N-palmitoyl cysteine. Residue Cys21 is the site of S-diacylglycerol cysteine attachment. Asp47 lines the guanosine pocket. An inosine-binding site is contributed by Asp47. Adenosine-binding positions include 47–48 (DS) and Phe56. Positions 57, 128, 206, 232, 258, and 280 each coordinate guanosine. 2 residues coordinate inosine: Asn57 and Asp128. Positions 128, 206, 232, 258, and 280 each coordinate adenosine. Residues Gly232, Asp258, and Lys280 each coordinate inosine.

The protein belongs to the BMP lipoprotein family. As to quaternary structure, monomer.

The protein resides in the cell membrane. Functionally, binds purine nucleosides and may play a role in purine nucleoside uptake. May be part of an ABC-type nucleoside uptake system. Has highest affinity for guanosine, followed by inosine and adenosine. Has very low affinity for cytidine and does not bind thymidine. The sequence is that of Membrane lipoprotein TmpC (tmpC) from Treponema pallidum (strain Nichols).